Here is a 481-residue protein sequence, read N- to C-terminus: Protein nucleotidyltransferase YdiU (481 aa).

Glycine 85, glycine 87, arginine 88, lysine 108, aspartate 120, glycine 121, arginine 172, and arginine 179 together coordinate ATP. The Proton acceptor role is filled by aspartate 248. Positions 249 and 258 each coordinate Mg(2+). Aspartate 258 provides a ligand contact to ATP.

Belongs to the SELO family. Requires Mg(2+) as cofactor. It depends on Mn(2+) as a cofactor.

It catalyses the reaction L-seryl-[protein] + ATP = 3-O-(5'-adenylyl)-L-seryl-[protein] + diphosphate. It carries out the reaction L-threonyl-[protein] + ATP = 3-O-(5'-adenylyl)-L-threonyl-[protein] + diphosphate. The enzyme catalyses L-tyrosyl-[protein] + ATP = O-(5'-adenylyl)-L-tyrosyl-[protein] + diphosphate. The catalysed reaction is L-histidyl-[protein] + UTP = N(tele)-(5'-uridylyl)-L-histidyl-[protein] + diphosphate. It catalyses the reaction L-seryl-[protein] + UTP = O-(5'-uridylyl)-L-seryl-[protein] + diphosphate. It carries out the reaction L-tyrosyl-[protein] + UTP = O-(5'-uridylyl)-L-tyrosyl-[protein] + diphosphate. Functionally, nucleotidyltransferase involved in the post-translational modification of proteins. It can catalyze the addition of adenosine monophosphate (AMP) or uridine monophosphate (UMP) to a protein, resulting in modifications known as AMPylation and UMPylation. This Cereibacter sphaeroides (strain KD131 / KCTC 12085) (Rhodobacter sphaeroides) protein is Protein nucleotidyltransferase YdiU.